A 263-amino-acid polypeptide reads, in one-letter code: 3-methyl-2-oxobutanoate hydroxymethyltransferase (263 aa).

Positions 43 and 82 each coordinate Mg(2+). 3-methyl-2-oxobutanoate contacts are provided by residues D43 to S44, D82, and K111. E113 provides a ligand contact to Mg(2+). Residue E179 is the Proton acceptor of the active site.

The protein belongs to the PanB family. Homodecamer; pentamer of dimers. It depends on Mg(2+) as a cofactor.

It localises to the cytoplasm. The enzyme catalyses 3-methyl-2-oxobutanoate + (6R)-5,10-methylene-5,6,7,8-tetrahydrofolate + H2O = 2-dehydropantoate + (6S)-5,6,7,8-tetrahydrofolate. The protein operates within cofactor biosynthesis; (R)-pantothenate biosynthesis; (R)-pantoate from 3-methyl-2-oxobutanoate: step 1/2. Catalyzes the reversible reaction in which hydroxymethyl group from 5,10-methylenetetrahydrofolate is transferred onto alpha-ketoisovalerate to form ketopantoate. The polypeptide is 3-methyl-2-oxobutanoate hydroxymethyltransferase (Neisseria meningitidis serogroup A / serotype 4A (strain DSM 15465 / Z2491)).